A 37-amino-acid chain; its full sequence is Large ribosomal subunit protein bL36 (37 aa).

The protein belongs to the bacterial ribosomal protein bL36 family.

This chain is Large ribosomal subunit protein bL36, found in Clostridium perfringens (strain ATCC 13124 / DSM 756 / JCM 1290 / NCIMB 6125 / NCTC 8237 / Type A).